The primary structure comprises 790 residues: RNA-directed RNA polymerase 2a (790 aa).

One can recognise a RdRp catalytic domain in the interval 524-639 (FHFKEIDFSK…GTVEELPRDQ (116 aa)). Positions 771-790 (IKPRRVKKSHSDARSRARRA) are disordered. Basic and acidic residues predominate over residues 779–790 (SHSDARSRARRA).

The protein belongs to the bromoviridae 2a family. In terms of assembly, interacts with replication protein 1a.

The catalysed reaction is RNA(n) + a ribonucleoside 5'-triphosphate = RNA(n+1) + diphosphate. Functionally, RNA-dependent RNA polymerase which replicates the viral genome composed of 3 RNA segments, RNA1, RNA2 and RNA3. The polypeptide is RNA-directed RNA polymerase 2a (Alfalfa mosaic virus (AMV)).